The primary structure comprises 129 residues: Glycerol-3-phosphate cytidylyltransferase (129 aa).

Residues 9-10 (TF) and 14-17 (HYGH) each bind CTP. Lys-44 provides a ligand contact to substrate. Lys-46 contributes to the CTP binding site. A substrate-binding site is contributed by Lys-77. Residue 113–120 (RTDGISTT) participates in CTP binding.

This sequence belongs to the cytidylyltransferase family. As to quaternary structure, homodimer.

It is found in the cytoplasm. It carries out the reaction sn-glycerol 3-phosphate + CTP + H(+) = CDP-glycerol + diphosphate. Its pathway is cell wall biogenesis; poly(ribitol phosphate) teichoic acid biosynthesis. Functionally, catalyzes the transfer of the cytidylyl group of CTP to sn-glycerol 3-phosphate so the activated glycerol 3-phosphate can be used for teichoic acid synthesis, via incorporation into both the linkage unit by TarB and TarF. The sequence is that of Glycerol-3-phosphate cytidylyltransferase (tarD) from Bacillus spizizenii (strain ATCC 23059 / NRRL B-14472 / W23) (Bacillus subtilis subsp. spizizenii).